Reading from the N-terminus, the 278-residue chain is Dehydrogenase/reductase SDR family member 4 (278 aa).

An NADP(+)-binding site is contributed by 36–60 (LVTASTDGIGFAIARRLAQDGAHVV). Position 92 is an N6-acetyllysine; alternate (Lys-92). An N6-succinyllysine; alternate modification is found at Lys-92. The residue at position 105 (Lys-105) is an N6-acetyllysine. Ser-169 contributes to the substrate binding site. The Proton acceptor role is filled by Tyr-182. An NADP(+)-binding site is contributed by Lys-186. At Lys-216 the chain carries N6-acetyllysine; alternate. Lys-216 carries the N6-succinyllysine; alternate modification. Position 220 is a phosphoserine (Ser-220). 2 positions are modified to N6-succinyllysine: Lys-227 and Lys-234. The Peroxisomal targeting signal motif lies at 276–278 (SRL).

It belongs to the short-chain dehydrogenases/reductases (SDR) family. As to quaternary structure, homotetramer.

Its subcellular location is the peroxisome. The enzyme catalyses a secondary alcohol + NADP(+) = a ketone + NADPH + H(+). It catalyses the reaction 3beta-hydroxy-5beta-pregnane-20-one + NADP(+) = 5beta-pregnan-3,20-dione + NADPH + H(+). The catalysed reaction is 5beta-dihydrotestosterone + NADPH + H(+) = 5beta-androstane-3beta,17beta-diol + NADP(+). It carries out the reaction 5beta-androstane-3,17-dione + NADPH + H(+) = 3beta-hydroxy-5beta-androstane-17-one + NADP(+). The enzyme catalyses isatin + NADPH + H(+) = 3-hydroxyindolin-2-one + NADP(+). It catalyses the reaction lithocholate + NADP(+) = 3-oxo-5beta-cholan-24-oate + NADPH + H(+). The catalysed reaction is 3-oxo-5beta-cholan-24-oate + NADPH + H(+) = isolithocholate + NADP(+). Its function is as follows. NADPH-dependent oxidoreductase which catalyzes the reduction of a variety of compounds bearing carbonyl groups including ketosteroids, alpha-dicarbonyl compounds, aldehydes, aromatic ketones and quinones. Reduces 3-ketosteroids and benzil into 3beta-hydroxysteroids and R-benzoin, respectively, in contrast to the stereoselectivity of non-primate DHRS4s which produce 3alpha-hydroxysteroids and S-benzoin. Diplays low activity toward all-trans-retinal and no activity toward 9-cis-retinal as compared to non-primate mammals. In the reverse reaction, catalyze the NAD-dependent oxidation of 3beta-hydroxysteroids and alcohol, but with much lower efficiency. Involved in the metabolism of 3beta-hydroxysteroids, isatin and xenobiotic carbonyl compounds. This is Dehydrogenase/reductase SDR family member 4 (DHRS4) from Pongo abelii (Sumatran orangutan).